Here is a 396-residue protein sequence, read N- to C-terminus: Elongation factor Tu (396 aa).

The tr-type G domain maps to 10–206 (KPHCNIGTIG…AVDEFIPQPT (197 aa)). The segment at 19-26 (GHVDHGKT) is G1. 19–26 (GHVDHGKT) contacts GTP. A Mg(2+)-binding site is contributed by T26. Positions 60–64 (GITIS) are G2. The G3 stretch occupies residues 81–84 (DCPG). Residues 81–85 (DCPGH) and 136–139 (NKVD) each bind GTP. Positions 136-139 (NKVD) are G4. The tract at residues 174–176 (SAL) is G5.

The protein belongs to the TRAFAC class translation factor GTPase superfamily. Classic translation factor GTPase family. EF-Tu/EF-1A subfamily. As to quaternary structure, monomer.

It is found in the cytoplasm. The enzyme catalyses GTP + H2O = GDP + phosphate + H(+). In terms of biological role, GTP hydrolase that promotes the GTP-dependent binding of aminoacyl-tRNA to the A-site of ribosomes during protein biosynthesis. This is Elongation factor Tu from Pelagibacter ubique (strain HTCC1062).